Consider the following 150-residue polypeptide: Catabolic 3-dehydroquinase 2 (150 aa).

Tyr23 acts as the Proton acceptor in catalysis. Substrate contacts are provided by Asn74, His80, and Asp87. Residue His100 is the Proton donor of the active site. Residues 101–102 (IT) and Arg111 each bind substrate.

This sequence belongs to the type-II 3-dehydroquinase family. Homododecamer. Adopts a ring-like structure, composed of an arrangement of two hexameric rings stacked on top of one another.

It carries out the reaction 3-dehydroquinate = 3-dehydroshikimate + H2O. The protein operates within aromatic compound metabolism; 3,4-dihydroxybenzoate biosynthesis; 3,4-dihydroxybenzoate from 3-dehydroquinate: step 1/2. Is involved in the catabolism of quinate. Allows the utilization of quinate as carbon source via the beta-ketoadipate pathway. The chain is Catabolic 3-dehydroquinase 2 from Aspergillus flavus (strain ATCC 200026 / FGSC A1120 / IAM 13836 / NRRL 3357 / JCM 12722 / SRRC 167).